The primary structure comprises 240 residues: Ribonuclease PH (240 aa).

Residues R87 and 125-127 each bind phosphate; that span reads GTR.

It belongs to the RNase PH family. Homohexameric ring arranged as a trimer of dimers.

The catalysed reaction is tRNA(n+1) + phosphate = tRNA(n) + a ribonucleoside 5'-diphosphate. Phosphorolytic 3'-5' exoribonuclease that plays an important role in tRNA 3'-end maturation. Removes nucleotide residues following the 3'-CCA terminus of tRNAs; can also add nucleotides to the ends of RNA molecules by using nucleoside diphosphates as substrates, but this may not be physiologically important. Probably plays a role in initiation of 16S rRNA degradation (leading to ribosome degradation) during starvation. This Pseudomonas fluorescens (strain Pf0-1) protein is Ribonuclease PH.